A 146-amino-acid polypeptide reads, in one-letter code: Hemoglobin subunit beta (146 aa).

One can recognise a Globin domain in the interval 2-146 (QWTAEEKQLI…VAHALARKYH (145 aa)). Heme b is bound by residues His-63 and His-92.

The protein belongs to the globin family. Heterotetramer of two alpha chains and two beta chains. In terms of tissue distribution, red blood cells.

Functionally, involved in oxygen transport from the lung to the various peripheral tissues. The sequence is that of Hemoglobin subunit beta (HBB) from Passer montanus (Eurasian tree sparrow).